The sequence spans 176 residues: Tubulin polymerization-promoting protein family member 3 (176 aa).

Residues 126-152 (TDTSKYTGSHKERFDESGKGKGKGGRE) are disordered. Basic and acidic residues predominate over residues 134-152 (SHKERFDESGKGKGKGGRE).

It belongs to the TPPP family.

It localises to the cytoplasm. The protein localises to the cytoskeleton. Functionally, regulator of microtubule dynamic that has microtubule bundling activity. The chain is Tubulin polymerization-promoting protein family member 3 (tppp3) from Xenopus tropicalis (Western clawed frog).